The primary structure comprises 144 residues: Large ribosomal subunit protein uL16 (144 aa).

Belongs to the universal ribosomal protein uL16 family. In terms of assembly, part of the 50S ribosomal subunit.

Functionally, binds 23S rRNA and is also seen to make contacts with the A and possibly P site tRNAs. This is Large ribosomal subunit protein uL16 from Lacticaseibacillus paracasei (strain ATCC 334 / BCRC 17002 / CCUG 31169 / CIP 107868 / KCTC 3260 / NRRL B-441) (Lactobacillus paracasei).